The chain runs to 474 residues: tRNA-2-methylthio-N(6)-dimethylallyladenosine synthase (474 aa).

An MTTase N-terminal domain is found at 3–120 (KKLYIKTFGC…LPQMISTRQI (118 aa)). Positions 12, 49, 83, 157, 161, and 164 each coordinate [4Fe-4S] cluster. Residues 143–382 (RTEGVTAFVS…ELQAQAISVR (240 aa)) enclose the Radical SAM core domain. The 64-residue stretch at 381-444 (VRMVGTTQRV…SHTLRGENVR (64 aa)) folds into the TRAM domain.

Belongs to the methylthiotransferase family. MiaB subfamily. Monomer. [4Fe-4S] cluster is required as a cofactor.

The protein localises to the cytoplasm. It carries out the reaction N(6)-dimethylallyladenosine(37) in tRNA + (sulfur carrier)-SH + AH2 + 2 S-adenosyl-L-methionine = 2-methylsulfanyl-N(6)-dimethylallyladenosine(37) in tRNA + (sulfur carrier)-H + 5'-deoxyadenosine + L-methionine + A + S-adenosyl-L-homocysteine + 2 H(+). Functionally, catalyzes the methylthiolation of N6-(dimethylallyl)adenosine (i(6)A), leading to the formation of 2-methylthio-N6-(dimethylallyl)adenosine (ms(2)i(6)A) at position 37 in tRNAs that read codons beginning with uridine. The protein is tRNA-2-methylthio-N(6)-dimethylallyladenosine synthase of Nitrosospira multiformis (strain ATCC 25196 / NCIMB 11849 / C 71).